Consider the following 225-residue polypeptide: Membrin-11 (225 aa).

Ala2 carries the N-acetylalanine modification. The Cytoplasmic portion of the chain corresponds to 2 to 200; it reads ASGIVEGGGS…VLRLIERRNR (199 aa). A helical; Anchor for type IV membrane protein membrane pass occupies residues 201 to 221; sequence VDTWIKYAGMIATLVILYLFI. The Vesicular segment spans residues 222–225; it reads RWTR.

It belongs to the GOSR2 family.

The protein localises to the golgi apparatus membrane. Its function is as follows. Involved in transport of proteins from the cis/medial-Golgi to the trans-Golgi network. This is Membrin-11 (MEMB11) from Arabidopsis thaliana (Mouse-ear cress).